A 94-amino-acid chain; its full sequence is Small ribosomal subunit protein uS19 (94 aa).

The protein belongs to the universal ribosomal protein uS19 family.

Its function is as follows. Protein S19 forms a complex with S13 that binds strongly to the 16S ribosomal RNA. This Wolbachia sp. subsp. Brugia malayi (strain TRS) protein is Small ribosomal subunit protein uS19.